A 20-amino-acid polypeptide reads, in one-letter code: Elastase (20 aa).

The region spanning 1-20 (VVGGEVARAHSWPWQISLQY) is the Peptidase S1 domain.

It belongs to the peptidase S1 family. Elastase subfamily.

In terms of biological role, digests most rapidly at the C-terminal side of alanine residues, but also cleaves at valine and leucine residues. This chain is Elastase, found in Gadus morhua (Atlantic cod).